The chain runs to 234 residues: GTP cyclohydrolase 1 (234 aa).

Residues 1–26 (MDALIKPLRAGKPDAKPADPKGTEFR) form a disordered region. Residues 11–26 (GKPDAKPADPKGTEFR) show a composition bias toward basic and acidic residues. Cys123, His126, and Cys194 together coordinate Zn(2+).

The protein belongs to the GTP cyclohydrolase I family. As to quaternary structure, toroid-shaped homodecamer, composed of two pentamers of five dimers.

The enzyme catalyses GTP + H2O = 7,8-dihydroneopterin 3'-triphosphate + formate + H(+). The protein operates within cofactor biosynthesis; 7,8-dihydroneopterin triphosphate biosynthesis; 7,8-dihydroneopterin triphosphate from GTP: step 1/1. The protein is GTP cyclohydrolase 1 of Rhodopseudomonas palustris (strain BisB18).